The primary structure comprises 338 residues: MAKWGEGDPRWIVEERADATNVNNWHWTERDASNWSTEKLKTLFLAVRVENEEGKCEVTEVNKLDGEASINNRKGKLIFFYEWTIKLNWTGTSKSGVQYKGHVEIPNLSDENSVDEVEISVSLAKDEPDTNLVALMKEDGVKLLREAVGIYISTLKTEFTQGMILPTVNGESVDPVGQPALKTETCKAKSAPSKSQAKPVGVKIPTCKITLKETFLTSPEELYRVFTTQELVQAFTHAPAALEADRGGKFHMVDGNVTGEFTDLVPEKHIAMKWRFKSWPEGHFATITLTFIDKNGETELCMEGRGIPAPEEERTRQGWQRYYFEGIKQTFGYGARLF.

At Lys-3 the chain carries N6-acetyllysine. A Glycyl lysine isopeptide (Lys-Gly) (interchain with G-Cter in SUMO1) cross-link involves residue Lys-182. Ser-193 carries the phosphoserine modification. Residue Lys-203 forms a Glycyl lysine isopeptide (Lys-Gly) (interchain with G-Cter in SUMO2) linkage. Position 212 is an N6-acetyllysine (Lys-212). Tyr-223 bears the Phosphotyrosine; by ABL mark.

It belongs to the AHA1 family. As to quaternary structure, interacts with HSPCA/HSP90. Interacts with HSP90AA1; the interaction activates HSP90AA1 ATPase activity. Interacts with HSP90AB1. Interacts with GCH1. Interacts with SRPK1. Interacts with FLCN. In terms of processing, phosphorylation at Tyr-223 enhances binding to chaperone HSP90AA1.

The protein resides in the cytoplasm. It is found in the cytosol. It localises to the endoplasmic reticulum. In terms of biological role, acts as a co-chaperone of HSP90AA1. Activates the ATPase activity of HSP90AA1 leading to increase in its chaperone activity. Competes with the inhibitory co-chaperone FNIP1 for binding to HSP90AA1, thereby providing a reciprocal regulatory mechanism for chaperoning of client proteins. Competes with the inhibitory co-chaperone TSC1 for binding to HSP90AA1, thereby providing a reciprocal regulatory mechanism for chaperoning of client proteins. This chain is Activator of 90 kDa heat shock protein ATPase homolog 1 (Ahsa1), found in Mus musculus (Mouse).